Here is a 487-residue protein sequence, read N- to C-terminus: MDALLTKFNEDRSLQDENLSQPRTRVRIVDDNLYNKSNPFQLCYKKRDYGSQYYHIYQYRLKTFRERVLKECDKRWDAGFTLNGQLVLKKDKVLDIQGNQPCWCVGSIYCEMKYKPNVLDEVINDTYGAPDLTKSYTDKEGGSDEIMLEDESGRVLLVGDFIRSTPFITGVVVGILGMEAEAGTFQVLDICYPTPLPQNPFPAPIATCPTRGKIALVSGLNLNNTSPDRLLRLEILREFLMGRINNKIDDISLIGRLLICGNSVDFDIKSVNKDELMISLTEFSKFLHNILPSISVDIMPGTNDPSDKSLPQQPFHKSLFDKSLESYFNGSNKEILNLVTNPYEFSYNGVDVLAVSGKNINDICKYVIPSNDNGESENKVEEGESNDFKDDIEHRLDLMECTMKWQNIAPTAPDTLWCYPYTDKDPFVLDKWPHVYIVANQPYFGTRVVEIGGKNIKIISVPEFSSTGMIILLDLETLEAETVKIDI.

At M1 the chain carries N-acetylmethionine. S20 carries the post-translational modification Phosphoserine.

This sequence belongs to the DNA polymerase delta/II small subunit family. In terms of assembly, DNA polymerase delta is a heterotrimer of POL3, POL32 and HYS2.

The protein resides in the nucleus. The enzyme catalyses DNA(n) + a 2'-deoxyribonucleoside 5'-triphosphate = DNA(n+1) + diphosphate. Functionally, DNA polymerase delta (DNA polymerase III) participates in chromosomal DNA replication. It is required during synthesis of the leading and lagging DNA strands at the replication fork and binds at/or near replication origins and moves along DNA with the replication fork. It has 3'-5' proofreading exonuclease activity that correct errors arising during DNA replication. It is also involved in DNA synthesis during DNA repair. This chain is DNA polymerase delta small subunit (POL31), found in Saccharomyces cerevisiae (strain ATCC 204508 / S288c) (Baker's yeast).